We begin with the raw amino-acid sequence, 260 residues long: Ribosome maturation factor RimP (260 aa).

Basic and acidic residues-rich tracts occupy residues 189–199 and 215–227; these read RRGRDAEREQL and AREMRDKAGPRKE. The interval 189–260 is disordered; sequence RRGRDAEREQ…QTTSDPHQGE (72 aa). A compositionally biased stretch (basic residues) spans 228-242; it reads KTAKKPLPKNTKAHR.

Belongs to the RimP family.

Its subcellular location is the cytoplasm. Required for maturation of 30S ribosomal subunits. This Afipia carboxidovorans (strain ATCC 49405 / DSM 1227 / KCTC 32145 / OM5) (Oligotropha carboxidovorans) protein is Ribosome maturation factor RimP.